A 327-amino-acid chain; its full sequence is MRPPGFWSRPPTHPLARILAPVGRIYGGLTADRMDRPGAAPPCPVLCVGNFTLGGAGKTPTALALAGLLRDLGRTPAFLSRGYGGRLSGPVIVDPARHRAEEVGDEPLLLARAATAVVARDRPAGARLCAGSGADVIVMDDGLQNPSLSKSLSLAVIDGGAVIGNGLPFPAGPLRAPLLRQWRHVAGLVLIGEGMAGSGVAAEAEAQGLPVHRARLVPEGGADWAGRRVVAFAGIGRPQKFFETLRALGAEIVAERAFPDHHPYRPRDWAALTALAAREGGDLVTTAKDAVRLPPEARGAVAVLTVALAFDDEAGLRRQLAAALPRA.

52 to 59 serves as a coordination point for ATP; the sequence is TLGGAGKT.

The protein belongs to the LpxK family.

It catalyses the reaction a lipid A disaccharide + ATP = a lipid IVA + ADP + H(+). It participates in glycolipid biosynthesis; lipid IV(A) biosynthesis; lipid IV(A) from (3R)-3-hydroxytetradecanoyl-[acyl-carrier-protein] and UDP-N-acetyl-alpha-D-glucosamine: step 6/6. In terms of biological role, transfers the gamma-phosphate of ATP to the 4'-position of a tetraacyldisaccharide 1-phosphate intermediate (termed DS-1-P) to form tetraacyldisaccharide 1,4'-bis-phosphate (lipid IVA). The sequence is that of Tetraacyldisaccharide 4'-kinase from Methylorubrum populi (strain ATCC BAA-705 / NCIMB 13946 / BJ001) (Methylobacterium populi).